A 65-amino-acid chain; its full sequence is Large ribosomal subunit protein bL33c (65 aa).

It belongs to the bacterial ribosomal protein bL33 family.

The protein localises to the plastid. The chain is Large ribosomal subunit protein bL33c from Aneura mirabilis (Parasitic liverwort).